We begin with the raw amino-acid sequence, 411 residues long: Translation initiation factor 2 subunit gamma (411 aa).

Positions 9-201 (QPTVNIGMVG…AIEKYIPTPE (193 aa)) constitute a tr-type G domain. The G1 stretch occupies residues 18–25 (GHVDHGKS). Positions 21, 25, 46, and 48 each coordinate Mg(2+). 21-26 (DHGKST) lines the GTP pocket. The segment at 46-50 (GISIK) is G2. Residues 88–91 (DAPG) are G3. GTP contacts are provided by residues 144-147 (NKID) and 179-181 (SAY). The tract at residues 144–147 (NKID) is G4. A G5 region spans residues 179-181 (SAY).

It belongs to the TRAFAC class translation factor GTPase superfamily. Classic translation factor GTPase family. EIF2G subfamily. As to quaternary structure, heterotrimer composed of an alpha, a beta and a gamma chain. Mg(2+) serves as cofactor.

The enzyme catalyses GTP + H2O = GDP + phosphate + H(+). EIF-2 functions in the early steps of protein synthesis by forming a ternary complex with GTP and initiator tRNA. The protein is Translation initiation factor 2 subunit gamma of Thermoplasma volcanium (strain ATCC 51530 / DSM 4299 / JCM 9571 / NBRC 15438 / GSS1).